A 706-amino-acid polypeptide reads, in one-letter code: Termination factor NPH-I homolog (706 aa).

Residues 62 to 227 (IGQGENTRGL…VPCFNMLSGR (166 aa)) form the Helicase ATP-binding domain. 75-82 (HQMGMGKT) provides a ligand contact to ATP. The DEAH box signature appears at 168 to 171 (DEAH). A Helicase C-terminal domain is found at 417-599 (QCLQPLKVLE…HLNSAFRDLL (183 aa)).

It belongs to the DEAD box helicase family. DEAH subfamily. Part of the viral DNA-directed RNA polymerase that consists of 8 polII-like subunits (RPB1, RPB2, RPB3, RPB5, RPB6, RPB7, RPB9, RPB10), a capping enzyme and a termination factor.

It localises to the virion. Its function is as follows. Putative DNA-dependent ATPase required for providing the needed energy to achieve the termination of early transcripts. The protein is Termination factor NPH-I homolog of African swine fever virus (isolate Warthog/Namibia/Wart80/1980) (ASFV).